Consider the following 89-residue polypeptide: uncharacterized protein (89 aa).

This is an uncharacterized protein from Saccharomyces cerevisiae (strain ATCC 204508 / S288c) (Baker's yeast).